Here is a 395-residue protein sequence, read N- to C-terminus: Protein maternal effect lethal 26 (395 aa).

The 122-residue stretch at 41-162 (KVQHTWTVKN…RDMIIVNVEI (122 aa)) folds into the MATH domain. Positions 201–269 (CDFAINVNGK…IYCGRCNKDI (69 aa)) constitute a BTB domain.

Interacts (via BTB domain) with cul-3. Seems to be a component of a E3 ubiquitin-protein ligase complex containing cul-3. Interacts (probably via MATH domain) with mei-1, which targets mei-1 for ubiquitin-mediated proteolysis. Interacts (probably via MATH domain) with ppfr-1, the regulatory subunit of the PP4 complex; targets ppfr-1 for ubiquitin-mediated proteolysis. May interact (via MATH domain) with unc-89 (via Ig-like C2-type domain 2/3 and, Ig-like C2-type domain 50 and fibronectin type-III domain 2). Expressed in body wall muscles.

The protein localises to the cytoplasm. Its subcellular location is the myofibril. The protein resides in the sarcomere. It localises to the m line. It is found in the i band. It functions in the pathway protein modification; protein ubiquitination. In terms of biological role, probable substrate-specific adapter of an E3 ubiquitin-protein ligase complex which mediates the ubiquitination and subsequent proteasomal degradation of target proteins. Controls degradation of microtubule severing protein mei-1 after meiosis. Controls degradation of ppfr-1, the regulatory subunit of PP4 complex, after meiosis. In body wall muscles, involved in the organization of myosin thick filaments, likely by regulating the degradation of mei-1 downstream of unc-89. May also activate the TORC1 pathway. The polypeptide is Protein maternal effect lethal 26 (mel-26) (Caenorhabditis elegans).